Reading from the N-terminus, the 105-residue chain is Thioredoxin (105 aa).

The Thioredoxin domain occupies 2–105 (VKQIESKYAF…KLEATINELI (104 aa)). The residue at position 3 (K3) is an N6-acetyllysine. K8 carries the N6-succinyllysine modification. Residues C32 and C35 each act as nucleophile in the active site. C32 and C35 are oxidised to a cystine. K39 carries the post-translational modification N6-acetyllysine. S-nitrosocysteine is present on residues C62 and C69. C73 is subject to S-nitrosocysteine; alternate. At K94 the chain carries N6-acetyllysine; alternate. Position 94 is an N6-succinyllysine; alternate (K94).

The protein belongs to the thioredoxin family. Homodimer; disulfide-linked. Interacts with TXNIP through the redox-active site. Interacts with MAP3K5 and CASP3. Interacts with APEX1; the interaction stimulates the FOS/JUN AP-1 DNA-binding activity in a redox-dependent manner. In terms of processing, in the fully reduced protein, both Cys-69 and Cys-73 are nitrosylated in response to nitric oxide (NO). When two disulfide bonds are present in the protein, only Cys-73 is nitrosylated. Cys-73 can serve as donor for nitrosylation of target proteins. As to expression, erythrocytes.

Its subcellular location is the nucleus. The protein localises to the cytoplasm. It is found in the secreted. Functionally, participates in various redox reactions through the reversible oxidation of its active center dithiol to a disulfide and catalyzes dithiol-disulfide exchange reactions. Plays a role in the reversible S-nitrosylation of cysteine residues in target proteins, and thereby contributes to the response to intracellular nitric oxide. Nitrosylates the active site Cys of CASP3 in response to nitric oxide (NO), and thereby inhibits caspase-3 activity. Induces the FOS/JUN AP-1 DNA binding activity in ionizing radiation (IR) cells through its oxidation/reduction status and stimulates AP-1 transcriptional activity. The protein is Thioredoxin (TXN) of Sus scrofa (Pig).